The primary structure comprises 120 residues: Large ribosomal subunit protein bL12 (120 aa).

The protein belongs to the bacterial ribosomal protein bL12 family. Homodimer. Part of the ribosomal stalk of the 50S ribosomal subunit. Forms a multimeric L10(L12)X complex, where L10 forms an elongated spine to which 2 to 4 L12 dimers bind in a sequential fashion. Binds GTP-bound translation factors.

In terms of biological role, forms part of the ribosomal stalk which helps the ribosome interact with GTP-bound translation factors. Is thus essential for accurate translation. This is Large ribosomal subunit protein bL12 from Listeria welshimeri serovar 6b (strain ATCC 35897 / DSM 20650 / CCUG 15529 / CIP 8149 / NCTC 11857 / SLCC 5334 / V8).